The primary structure comprises 286 residues: Ribosome-inactivating protein momordin I (286 aa).

A signal peptide spans 1–23; that stretch reads MSRFSVLSFLILAIFLGGSIVKG. E183 is a catalytic residue. The N-linked (GlcNAc...) asparagine glycan is linked to N250. The propeptide at 270-286 is removed in mature form; that stretch reads AEGDNGDVSTTHGFSSY.

It belongs to the ribosome-inactivating protein family. Type 1 RIP subfamily.

The enzyme catalyses Endohydrolysis of the N-glycosidic bond at one specific adenosine on the 28S rRNA.. The protein is Ribosome-inactivating protein momordin I of Momordica charantia (Bitter gourd).